Here is a 109-residue protein sequence, read N- to C-terminus: Sulredoxin (109 aa).

Residues 3–107 (WKRTISAKAL…IRDNNGWIEV (105 aa)) form the Rieske domain. Residues C43, H45, C62, and H65 each contribute to the [2Fe-2S] cluster site.

As to quaternary structure, homooligomeric. [2Fe-2S] cluster serves as cofactor.

The protein localises to the cytoplasm. Its function is as follows. Not yet known. This Sulfurisphaera tokodaii (strain DSM 16993 / JCM 10545 / NBRC 100140 / 7) (Sulfolobus tokodaii) protein is Sulredoxin (sdx).